The chain runs to 294 residues: Nucleotide-binding protein DICTH_1001 (294 aa).

10–17 (GLSGAGKS) is a binding site for ATP. A GTP-binding site is contributed by 61–64 (DIRT).

This sequence belongs to the RapZ-like family.

In terms of biological role, displays ATPase and GTPase activities. In Dictyoglomus thermophilum (strain ATCC 35947 / DSM 3960 / H-6-12), this protein is Nucleotide-binding protein DICTH_1001.